A 67-amino-acid chain; its full sequence is Large ribosomal subunit protein bL35 (67 aa).

Positions 1–16 are enriched in basic residues; it reads MPKMKTKSSAKKRFRV. The tract at residues 1-24 is disordered; that stretch reads MPKMKTKSSAKKRFRVRPGGTVKR.

It belongs to the bacterial ribosomal protein bL35 family.

This chain is Large ribosomal subunit protein bL35, found in Delftia acidovorans (strain DSM 14801 / SPH-1).